A 296-amino-acid polypeptide reads, in one-letter code: 4-diphosphocytidyl-2-C-methyl-D-erythritol kinase (296 aa).

Lys-14 is an active-site residue. Residue 97 to 107 coordinates ATP; the sequence is PMGAGMGGGSS. The active site involves Asp-139.

The protein belongs to the GHMP kinase family. IspE subfamily.

It carries out the reaction 4-CDP-2-C-methyl-D-erythritol + ATP = 4-CDP-2-C-methyl-D-erythritol 2-phosphate + ADP + H(+). Its pathway is isoprenoid biosynthesis; isopentenyl diphosphate biosynthesis via DXP pathway; isopentenyl diphosphate from 1-deoxy-D-xylulose 5-phosphate: step 3/6. Functionally, catalyzes the phosphorylation of the position 2 hydroxy group of 4-diphosphocytidyl-2C-methyl-D-erythritol. The protein is 4-diphosphocytidyl-2-C-methyl-D-erythritol kinase of Polynucleobacter necessarius subsp. necessarius (strain STIR1).